The primary structure comprises 495 residues: Ribose import ATP-binding protein RbsA 3 (495 aa).

2 consecutive ABC transporter domains span residues 5–240 (VRLR…VGRE) and 250–492 (AEIG…TGVK). 37 to 44 (GENGAGKS) serves as a coordination point for ATP.

Belongs to the ABC transporter superfamily. Ribose importer (TC 3.A.1.2.1) family. In terms of assembly, the complex is composed of an ATP-binding protein (RbsA), two transmembrane proteins (RbsC) and a solute-binding protein (RbsB).

Its subcellular location is the cell membrane. The catalysed reaction is D-ribose(out) + ATP + H2O = D-ribose(in) + ADP + phosphate + H(+). Part of the ABC transporter complex RbsABC involved in ribose import. Responsible for energy coupling to the transport system. This chain is Ribose import ATP-binding protein RbsA 3, found in Rubrobacter xylanophilus (strain DSM 9941 / JCM 11954 / NBRC 16129 / PRD-1).